A 499-amino-acid chain; its full sequence is Multiphosphoryl transfer protein (499 aa).

One can recognise a PTS EIIA type-2 domain in the interval 2 to 142; the sequence is LELSESNIHL…AEFCAILMGE (141 aa). His62 serves as the catalytic Tele-phosphohistidine intermediate; for EIIA activity. A Phosphohistidine; by HPr modification is found at His62. The interval 155 to 285 is m domain; the sequence is SLDVNTQSLL…SDVETQSVEG (131 aa). Residues 286–376 form the HPr 1 domain; the sequence is AVVGTFTIRN…KAIANGLGEN (91 aa). Residue His300 is the Pros-phosphohistidine intermediate; for HPr 1 activity of the active site. His300 bears the Phosphohistidine mark. The interval 378-409 is linker; sequence SAVPPSEPDTIEIMGDQIHTPAVTEDDNLPAN. One can recognise an HPr 2 domain in the interval 410–499; the sequence is AIEAVFVIKN…GAVIESGLGE (90 aa). His424 carries the post-translational modification Phosphohistidine. The Pros-phosphohistidine intermediate; for HPr 2 activity role is filled by His424.

The protein localises to the cytoplasm. In terms of biological role, the phosphoenolpyruvate-dependent sugar phosphotransferase system (sugar PTS), a major carbohydrate active transport system, catalyzes the phosphorylation of incoming sugar substrates concomitantly with their translocation across the cell membrane. The enzyme II FruAB PTS system is involved in fructose transport. The protein is Multiphosphoryl transfer protein (fruB) of Haemophilus influenzae (strain ATCC 51907 / DSM 11121 / KW20 / Rd).